The chain runs to 329 residues: Endochitinase A (329 aa).

A signal peptide spans 1-23; it reads MRLCKFTALSSLLFSLLLLSASA. Residues 24–65 enclose the Chitin-binding type-1 domain; that stretch reads EQCGSQAGGARCPSGLCCSKFGWCGNTNDYCGPGNCQSQCPG. Disulfide bonds link C26–C41, C35–C47, C40–C54, and C59–C63. P67 carries the post-translational modification 4-hydroxyproline; partial. 4-hydroxyproline occurs at positions 69, 71, 72, and 74. Residue P75 is modified to 4-hydroxyproline; partial. 3 cysteine pairs are disulfide-bonded: C101/C163, C175/C183, and C282/C314. Catalysis depends on E145, which acts as the Proton donor. A propeptide spans 323-329 (removed in mature form); it reads GLLVDTM.

Belongs to the glycosyl hydrolase 19 family. Chitinase class I subfamily. The 4-hydroxyproline residues are not glycosylated in this plant vacuolar protein.

The protein localises to the vacuole. The enzyme catalyses Random endo-hydrolysis of N-acetyl-beta-D-glucosaminide (1-&gt;4)-beta-linkages in chitin and chitodextrins.. Functionally, defense against chitin-containing fungal pathogens. This is Endochitinase A (CHN48) from Nicotiana tabacum (Common tobacco).